The primary structure comprises 381 residues: Neuropeptide Y receptor type 2 (381 aa).

The segment at 1–37 is disordered; that stretch reads MGPIGTEADENQTVEEIKVEPYGPGHTTPRGELAPDP. The Extracellular segment spans residues 1–52; the sequence is MGPIGTEADENQTVEEIKVEPYGPGHTTPRGELAPDPEPELIDSTKLTEVRV. The N-linked (GlcNAc...) asparagine glycan is linked to N11. A helical membrane pass occupies residues 53–73; sequence VLILAYCSIILLGVVGNSLVI. The Cytoplasmic portion of the chain corresponds to 74–87; it reads HVVIKFKSMRTVTN. The helical transmembrane segment at 88 to 108 threads the bilayer; it reads FFIANLAVADLLVNTLCLPFT. Over 109-125 the chain is Extracellular; sequence LTYTLMGEWKMGPVLCH. C124 and C204 are disulfide-bonded. Residues 126–146 traverse the membrane as a helical segment; sequence LVPYAQGLAVQVSTVTLTVIA. Topologically, residues 147 to 166 are cytoplasmic; the sequence is LDRHRCIVYHLDSKISKQNS. The helical transmembrane segment at 167-187 threads the bilayer; the sequence is FLIIGLAWGISALLASPLAIF. Topologically, residues 188–217 are extracellular; sequence REYSLIEIIPDFEIVACTEKWPGEEKSIYG. Residues 218–238 traverse the membrane as a helical segment; sequence TVYSLSSLLILYVLPLGIISV. The Cytoplasmic portion of the chain corresponds to 239 to 269; sequence SYVRIWSKLKNHVSPGAANDHYHQRRQKTTK. A helical transmembrane segment spans residues 270-290; that stretch reads MLVFVVVVFAVSWLPLHAFQL. At 291-305 the chain is on the extracellular side; that stretch reads AVDIDSQVLDLKEYK. A helical transmembrane segment spans residues 306–326; the sequence is LIFTVFHIIAMCSTFANPLLY. The Cytoplasmic portion of the chain corresponds to 327-381; sequence GWMNSNYRKAFLSAFRCQQRLDAIQSEVCVTGKAKTNVEVEKNHGAADSAEATNV. C343 carries S-palmitoyl cysteine lipidation.

The protein belongs to the G-protein coupled receptor 1 family.

The protein localises to the cell membrane. In terms of biological role, receptor for neuropeptide Y and peptide YY. The sequence is that of Neuropeptide Y receptor type 2 (NPY2R) from Cavia porcellus (Guinea pig).